Here is a 139-residue protein sequence, read N- to C-terminus: uncharacterized protein (139 aa).

This is an uncharacterized protein from Dryophytes versicolor (chameleon treefrog).